Consider the following 58-residue polypeptide: Ribulose bisphosphate carboxylase large chain (58 aa).

A propeptide spanning residues 1-2 is cleaved from the precursor; that stretch reads MS. Proline 3 is subject to N-acetylproline. Position 14 is an N6,N6,N6-trimethyllysine (lysine 14).

Belongs to the RuBisCO large chain family. Type I subfamily. Heterohexadecamer of 8 large chains and 8 small chains.

The protein resides in the plastid. It localises to the chloroplast. It carries out the reaction 2 (2R)-3-phosphoglycerate + 2 H(+) = D-ribulose 1,5-bisphosphate + CO2 + H2O. The catalysed reaction is D-ribulose 1,5-bisphosphate + O2 = 2-phosphoglycolate + (2R)-3-phosphoglycerate + 2 H(+). RuBisCO catalyzes two reactions: the carboxylation of D-ribulose 1,5-bisphosphate, the primary event in carbon dioxide fixation, as well as the oxidative fragmentation of the pentose substrate in the photorespiration process. Both reactions occur simultaneously and in competition at the same active site. The sequence is that of Ribulose bisphosphate carboxylase large chain (rbcL) from Rosa damascena (Damask rose).